The chain runs to 99 residues: NADH-quinone oxidoreductase subunit K (99 aa).

The next 3 membrane-spanning stretches (helical) occupy residues 3–23 (LVNY…TVLV), 28–48 (IIMF…FVAF), and 59–79 (VVAF…LAII).

This sequence belongs to the complex I subunit 4L family. As to quaternary structure, NDH-1 is composed of 14 different subunits. Subunits NuoA, H, J, K, L, M, N constitute the membrane sector of the complex.

The protein localises to the cell membrane. The catalysed reaction is a quinone + NADH + 5 H(+)(in) = a quinol + NAD(+) + 4 H(+)(out). Functionally, NDH-1 shuttles electrons from NADH, via FMN and iron-sulfur (Fe-S) centers, to quinones in the respiratory chain. The immediate electron acceptor for the enzyme in this species is believed to be a menaquinone. Couples the redox reaction to proton translocation (for every two electrons transferred, four hydrogen ions are translocated across the cytoplasmic membrane), and thus conserves the redox energy in a proton gradient. The sequence is that of NADH-quinone oxidoreductase subunit K from Beutenbergia cavernae (strain ATCC BAA-8 / DSM 12333 / CCUG 43141 / JCM 11478 / NBRC 16432 / NCIMB 13614 / HKI 0122).